The chain runs to 162 residues: Small ribosomal subunit protein uS13 (162 aa).

The interval 142 to 162 (RGQRTKSTGRRGSTVGVSRKK) is disordered.

Belongs to the universal ribosomal protein uS13 family. In terms of assembly, part of the 30S ribosomal subunit. Forms a loose heterodimer with protein S19. Forms two bridges to the 50S subunit in the 70S ribosome.

Its function is as follows. Located at the top of the head of the 30S subunit, it contacts several helices of the 16S rRNA. In the 70S ribosome it contacts the 23S rRNA (bridge B1a) and protein L5 of the 50S subunit (bridge B1b), connecting the 2 subunits; these bridges are implicated in subunit movement. This chain is Small ribosomal subunit protein uS13, found in Methanosarcina mazei (strain ATCC BAA-159 / DSM 3647 / Goe1 / Go1 / JCM 11833 / OCM 88) (Methanosarcina frisia).